The primary structure comprises 431 residues: Teosinte glume architecture 1 (431 aa).

Disordered stretches follow at residues 18–55 (QDHAAAAPSSGGHAANAAAAGTGTESRPPAPGAAGAPA) and 68–102 (ECEPGAARREREAAAGAAKRPRPAGPGGQQQQQCP). Residues 21–41 (AAAAPSSGGHAANAAAAGTGT) show a composition bias toward low complexity. The segment at 101–178 (CPSCAVDGCR…DGHNRRRRKP (78 aa)) adopts an SBP-type zinc-finger fold. Zn(2+)-binding residues include Cys104, Cys109, Cys126, His129, Cys145, Cys148, His152, and Cys164. The segment covering 408 to 419 (GGGSGGGEGSSD) has biased composition (gly residues). The tract at residues 408–431 (GGGSGGGEGSSDGGTSSSMPFSWQ) is disordered.

In terms of assembly, monomer and homodimer. In terms of tissue distribution, strongly expressed in immature ears and weakly in husks. Found in the inflorescence meristem of the developing ear, in the spikelet pair primordia, the glume primordia, the cupule forming region and other floral organs. Not detected in other tissues.

Its function is as follows. SBP transcriptional regulator probably involved in the domestication of maize. Acts as a transcriptional repressor binding to a 5'-GTAC-3' motif. May repress the growth of lateral branches in length and numbers. The polypeptide is Teosinte glume architecture 1 (Zea mays (Maize)).